A 419-amino-acid polypeptide reads, in one-letter code: Enolase (419 aa).

Gln-161 is a (2R)-2-phosphoglycerate binding site. Catalysis depends on Glu-205, which acts as the Proton donor. The Mg(2+) site is built by Asp-240, Glu-283, and Asp-309. Lys-334, Arg-363, Ser-364, and Lys-385 together coordinate (2R)-2-phosphoglycerate. Lys-334 serves as the catalytic Proton acceptor.

This sequence belongs to the enolase family. Requires Mg(2+) as cofactor.

It is found in the cytoplasm. The protein resides in the secreted. The protein localises to the cell surface. It carries out the reaction (2R)-2-phosphoglycerate = phosphoenolpyruvate + H2O. Its pathway is carbohydrate degradation; glycolysis; pyruvate from D-glyceraldehyde 3-phosphate: step 4/5. Functionally, catalyzes the reversible conversion of 2-phosphoglycerate (2-PG) into phosphoenolpyruvate (PEP). It is essential for the degradation of carbohydrates via glycolysis. The protein is Enolase of Saccharolobus islandicus (strain Y.G.57.14 / Yellowstone #1) (Sulfolobus islandicus).